A 123-amino-acid polypeptide reads, in one-letter code: cAMP-responsive element-binding protein-like 2 (123 aa).

Residues 1–24 are disordered; that stretch reads MDDSKVVGGKVKKPGKRGRKPAKI. Residues 10 to 21 show a composition bias toward basic residues; the sequence is KVKKPGKRGRKP. Residues 23-86 form the bZIP domain; sequence KIDLKAKLER…MAMDQGKIPS (64 aa). Residues 29–60 form a basic motif region; sequence KLERSRQSARECRARKKLRYQYLEELVSSRER. Positions 62-69 are leucine-zipper; the sequence is ICALREEL. The tract at residues 92-123 is disordered; sequence LTGEEQSKPQQNSSRHPKAGKTDANTNSLVGN. The segment covering 114-123 has biased composition (polar residues); sequence DANTNSLVGN.

This sequence belongs to the bZIP family. ATF subfamily. Interacts with CREB1; regulates CREB1 phosphorylation, stability and transcriptional activity. Phosphorylated by AMPK. Widely expressed with higher expression in adipose tissue, skeletal muscle, and liver (at protein level).

Its subcellular location is the nucleus. In terms of biological role, probable regulator of CREB1 transcriptional activity which is involved in adipose cells differentiation. May also play a regulatory role in the cell cycle. The polypeptide is cAMP-responsive element-binding protein-like 2 (Crebl2) (Mus musculus (Mouse)).